A 197-amino-acid chain; its full sequence is Adenylate kinase (197 aa).

7–15 (ALPGSGKTT) provides a ligand contact to ATP.

The protein belongs to the archaeal adenylate kinase family.

The protein resides in the cytoplasm. It carries out the reaction AMP + ATP = 2 ADP. The sequence is that of Adenylate kinase (adkA) from Pyrobaculum aerophilum (strain ATCC 51768 / DSM 7523 / JCM 9630 / CIP 104966 / NBRC 100827 / IM2).